The chain runs to 180 residues: Crossover junction endodeoxyribonuclease RuvC (180 aa).

Active-site residues include aspartate 7, glutamate 66, and aspartate 138. 3 residues coordinate Mg(2+): aspartate 7, glutamate 66, and aspartate 138.

The protein belongs to the RuvC family. As to quaternary structure, homodimer which binds Holliday junction (HJ) DNA. The HJ becomes 2-fold symmetrical on binding to RuvC with unstacked arms; it has a different conformation from HJ DNA in complex with RuvA. In the full resolvosome a probable DNA-RuvA(4)-RuvB(12)-RuvC(2) complex forms which resolves the HJ. Requires Mg(2+) as cofactor.

It localises to the cytoplasm. The enzyme catalyses Endonucleolytic cleavage at a junction such as a reciprocal single-stranded crossover between two homologous DNA duplexes (Holliday junction).. Its function is as follows. The RuvA-RuvB-RuvC complex processes Holliday junction (HJ) DNA during genetic recombination and DNA repair. Endonuclease that resolves HJ intermediates. Cleaves cruciform DNA by making single-stranded nicks across the HJ at symmetrical positions within the homologous arms, yielding a 5'-phosphate and a 3'-hydroxyl group; requires a central core of homology in the junction. The consensus cleavage sequence is 5'-(A/T)TT(C/G)-3'. Cleavage occurs on the 3'-side of the TT dinucleotide at the point of strand exchange. HJ branch migration catalyzed by RuvA-RuvB allows RuvC to scan DNA until it finds its consensus sequence, where it cleaves and resolves the cruciform DNA. This chain is Crossover junction endodeoxyribonuclease RuvC, found in Paraburkholderia phymatum (strain DSM 17167 / CIP 108236 / LMG 21445 / STM815) (Burkholderia phymatum).